A 77-amino-acid chain; its full sequence is Acyl carrier protein (77 aa).

Residues 1–77 (MSVEAKVKKI…DAIEYIRKKS (77 aa)) form the Carrier domain. Position 37 is an O-(pantetheine 4'-phosphoryl)serine (S37).

It belongs to the acyl carrier protein (ACP) family. Post-translationally, 4'-phosphopantetheine is transferred from CoA to a specific serine of apo-ACP by AcpS. This modification is essential for activity because fatty acids are bound in thioester linkage to the sulfhydryl of the prosthetic group.

The protein localises to the cytoplasm. The protein operates within lipid metabolism; fatty acid biosynthesis. Carrier of the growing fatty acid chain in fatty acid biosynthesis. The polypeptide is Acyl carrier protein (Desulforapulum autotrophicum (strain ATCC 43914 / DSM 3382 / VKM B-1955 / HRM2) (Desulfobacterium autotrophicum)).